The sequence spans 291 residues: Small ribosomal subunit biogenesis GTPase RsgA 2 (291 aa).

In terms of domain architecture, CP-type G spans 63-221; that stretch reads ENALVRPPVA…VADTPGFSSI (159 aa). Residues 112 to 115 and 164 to 172 each bind GTP; these read SKMD and GQSGVGKST. Zn(2+)-binding residues include Cys-245, Cys-250, His-252, and Cys-258.

The protein belongs to the TRAFAC class YlqF/YawG GTPase family. RsgA subfamily. In terms of assembly, monomer. Associates with 30S ribosomal subunit, binds 16S rRNA. It depends on Zn(2+) as a cofactor.

The protein resides in the cytoplasm. Its function is as follows. One of several proteins that assist in the late maturation steps of the functional core of the 30S ribosomal subunit. Helps release RbfA from mature subunits. May play a role in the assembly of ribosomal proteins into the subunit. Circularly permuted GTPase that catalyzes slow GTP hydrolysis, GTPase activity is stimulated by the 30S ribosomal subunit. The protein is Small ribosomal subunit biogenesis GTPase RsgA 2 of Listeria innocua serovar 6a (strain ATCC BAA-680 / CLIP 11262).